The following is a 334-amino-acid chain: Dolichyl-phosphate beta-glucosyltransferase (334 aa).

Residues 1–12 (MRALRFLIENRN) are Lumenal-facing. A helical transmembrane segment spans residues 13 to 33 (TVFFTLLVALVLSLYLLVYLF). The Cytoplasmic portion of the chain corresponds to 34–334 (SHTPRPPYPE…LGIYRDNKKC (301 aa)).

It belongs to the glycosyltransferase 2 family.

It localises to the endoplasmic reticulum membrane. It catalyses the reaction a di-trans,poly-cis-dolichyl phosphate + UDP-alpha-D-glucose = a di-trans,poly-cis-dolichyl beta-D-glucosyl phosphate + UDP. It functions in the pathway protein modification; protein glycosylation. In terms of biological role, endoplasmic reticulum membrane-bound UDP-glucose:dolichyl-phosphate glucosyltransferase involved in protein N-linked glycosylation. The chain is Dolichyl-phosphate beta-glucosyltransferase from Saccharomyces cerevisiae (strain ATCC 204508 / S288c) (Baker's yeast).